A 119-amino-acid chain; its full sequence is Large ribosomal subunit protein uL18 (119 aa).

Residues 1-20 are disordered; that stretch reads MSQIDKAARRQKIKARSRAT. Residues 9-19 are compositionally biased toward basic residues; the sequence is RRQKIKARSRA.

This sequence belongs to the universal ribosomal protein uL18 family. In terms of assembly, part of the 50S ribosomal subunit; part of the 5S rRNA/L5/L18/L25 subcomplex. Contacts the 5S and 23S rRNAs.

In terms of biological role, this is one of the proteins that bind and probably mediate the attachment of the 5S RNA into the large ribosomal subunit, where it forms part of the central protuberance. The sequence is that of Large ribosomal subunit protein uL18 from Chlorobaculum parvum (strain DSM 263 / NCIMB 8327) (Chlorobium vibrioforme subsp. thiosulfatophilum).